Consider the following 243-residue polypeptide: Cell division protein ZipA (243 aa).

Residues 1-4 (MSDV) lie on the Periplasmic side of the membrane. The helical transmembrane segment at 5–25 (TLLRIGIAIVGILFVAAVFFF) threads the bilayer. Topologically, residues 26-243 (STPKTSAHRV…VPPLIKNSRW (218 aa)) are cytoplasmic. The tract at residues 32–89 (AHRVRTKKEEPPRERREPMLSTEADNSPPQGVDEVPASVSQQQVNPEANKPGEVQLGK) is disordered. The segment covering 38 to 49 (KKEEPPRERREP) has biased composition (basic and acidic residues).

Belongs to the ZipA family. Interacts with FtsZ via their C-terminal domains.

The protein resides in the cell inner membrane. Functionally, essential cell division protein that stabilizes the FtsZ protofilaments by cross-linking them and that serves as a cytoplasmic membrane anchor for the Z ring. Also required for the recruitment to the septal ring of downstream cell division proteins. This chain is Cell division protein ZipA, found in Xylella fastidiosa (strain 9a5c).